The following is a 957-amino-acid chain: Bifunctional glutamine synthetase adenylyltransferase/adenylyl-removing enzyme (957 aa).

The adenylyl removase stretch occupies residues 1-447 (MFSQLDFTGL…IFNQLIGEEE (447 aa)). An adenylyl transferase region spans residues 454–957 (VNEQLAIWQD…IWQQIFTDNE (504 aa)).

It belongs to the GlnE family. The cofactor is Mg(2+).

It carries out the reaction [glutamine synthetase]-O(4)-(5'-adenylyl)-L-tyrosine + phosphate = [glutamine synthetase]-L-tyrosine + ADP. The enzyme catalyses [glutamine synthetase]-L-tyrosine + ATP = [glutamine synthetase]-O(4)-(5'-adenylyl)-L-tyrosine + diphosphate. Functionally, involved in the regulation of glutamine synthetase GlnA, a key enzyme in the process to assimilate ammonia. When cellular nitrogen levels are high, the C-terminal adenylyl transferase (AT) inactivates GlnA by covalent transfer of an adenylyl group from ATP to specific tyrosine residue of GlnA, thus reducing its activity. Conversely, when nitrogen levels are low, the N-terminal adenylyl removase (AR) activates GlnA by removing the adenylyl group by phosphorolysis, increasing its activity. The regulatory region of GlnE binds the signal transduction protein PII (GlnB) which indicates the nitrogen status of the cell. This chain is Bifunctional glutamine synthetase adenylyltransferase/adenylyl-removing enzyme, found in Haemophilus ducreyi (strain 35000HP / ATCC 700724).